We begin with the raw amino-acid sequence, 214 residues long: MVMMRIFFFLFLLAFPVFTANASVNDFCVANGPGARDTPSGFVCKNTAKVTAADFVYSGLAKPGNTTNIINAAVTPAFVGQFPGVIGLGVTLARLDLAPGGVIPMHTHPGASEILNVVEGTILAAFISSGNKVYEKALYPGDVMVFPQGLLDFQEITGKIAPGLCELRQRNPGLQILEFQHCFPTIFPPKTIAGTTCLDEATIKKLKSGLGGTN.

The signal sequence occupies residues 1 to 22 (MVMMRIFFFLFLLAFPVFTANA). A disulfide bond links Cys-28 and Cys-44. A Cupin type-1 domain is found at 58–204 (SGLAKPGNTT…TTCLDEATIK (147 aa)). 3 residues coordinate Mn(2+): His-106, His-108, and Glu-113.

It belongs to the germin family. In terms of assembly, oligomer (believed to be a pentamer but probably hexamer). Cotyledons and leaves.

It is found in the secreted. It localises to the extracellular space. The protein resides in the apoplast. The polypeptide is Germin-like protein (GLP) (Ipomoea nil (Japanese morning glory)).